Consider the following 98-residue polypeptide: UPF0390 protein zgc136864 (98 aa).

Residues 1–30 (MAQGKQKFKAQRPGGAKKHQNKPKGLKKGG) show a composition bias toward basic residues. Disordered stretches follow at residues 1 to 38 (MAQG…PKKA) and 63 to 98 (TQKA…GPSK). The segment covering 83-98 (KSGTAGAPKPAAGPSK) has biased composition (low complexity).

Belongs to the UPF0390 family.

The sequence is that of UPF0390 protein zgc136864 from Danio rerio (Zebrafish).